We begin with the raw amino-acid sequence, 350 residues long: Chorismate synthase (350 aa).

NADP(+) contacts are provided by Arg39 and Arg45. Residues 85 to 104 form a disordered region; sequence KDKKVPPVTRPRPGHADLPG. Residues 119–121, 213–214, Gly258, 273–277, and Arg299 each bind FMN; these read RAS, QG, and KPIPT.

This sequence belongs to the chorismate synthase family. In terms of assembly, homotetramer. FMNH2 serves as cofactor.

The enzyme catalyses 5-O-(1-carboxyvinyl)-3-phosphoshikimate = chorismate + phosphate. Its pathway is metabolic intermediate biosynthesis; chorismate biosynthesis; chorismate from D-erythrose 4-phosphate and phosphoenolpyruvate: step 7/7. Catalyzes the anti-1,4-elimination of the C-3 phosphate and the C-6 proR hydrogen from 5-enolpyruvylshikimate-3-phosphate (EPSP) to yield chorismate, which is the branch point compound that serves as the starting substrate for the three terminal pathways of aromatic amino acid biosynthesis. This reaction introduces a second double bond into the aromatic ring system. This is Chorismate synthase from Caldanaerobacter subterraneus subsp. tengcongensis (strain DSM 15242 / JCM 11007 / NBRC 100824 / MB4) (Thermoanaerobacter tengcongensis).